The sequence spans 432 residues: Phosphoribosylamine--glycine ligase (432 aa).

Positions 110–316 (RNFMKDNDIE…MIDVMSAVVN (207 aa)) constitute an ATP-grasp domain. Residue 137–194 (IEELGSVAIKPAGLTGGKGVKVMGDQLPDTGAAYDYAVSLLDGDNVVVEENLVGEEFT) participates in ATP binding. The Mg(2+) site is built by Gln-274, Glu-286, and Asn-288. Mn(2+)-binding residues include Gln-274, Glu-286, and Asn-288.

Belongs to the GARS family. Requires Mg(2+) as cofactor. It depends on Mn(2+) as a cofactor.

It catalyses the reaction 5-phospho-beta-D-ribosylamine + glycine + ATP = N(1)-(5-phospho-beta-D-ribosyl)glycinamide + ADP + phosphate + H(+). Its pathway is purine metabolism; IMP biosynthesis via de novo pathway; N(1)-(5-phospho-D-ribosyl)glycinamide from 5-phospho-alpha-D-ribose 1-diphosphate: step 2/2. In Methanococcoides burtonii (strain DSM 6242 / NBRC 107633 / OCM 468 / ACE-M), this protein is Phosphoribosylamine--glycine ligase.